The sequence spans 92 residues: Probable Fe(2+)-trafficking protein (92 aa).

This sequence belongs to the Fe(2+)-trafficking protein family.

Its function is as follows. Could be a mediator in iron transactions between iron acquisition and iron-requiring processes, such as synthesis and/or repair of Fe-S clusters in biosynthetic enzymes. In Shewanella sp. (strain W3-18-1), this protein is Probable Fe(2+)-trafficking protein.